The primary structure comprises 143 residues: Ribosomal RNA large subunit methyltransferase H (143 aa).

The S-adenosyl-L-methionine site is built by leucine 68 and glycine 95.

It belongs to the RNA methyltransferase RlmH family. In terms of assembly, homodimer.

The protein resides in the cytoplasm. It catalyses the reaction pseudouridine(1915) in 23S rRNA + S-adenosyl-L-methionine = N(3)-methylpseudouridine(1915) in 23S rRNA + S-adenosyl-L-homocysteine + H(+). Its function is as follows. Specifically methylates the pseudouridine at position 1915 (m3Psi1915) in 23S rRNA. The chain is Ribosomal RNA large subunit methyltransferase H from Mycoplasma mobile (strain ATCC 43663 / 163K / NCTC 11711) (Mesomycoplasma mobile).